A 183-amino-acid chain; its full sequence is Glutathione-regulated potassium-efflux system ancillary protein KefG (183 aa).

It belongs to the NAD(P)H dehydrogenase (quinone) family. KefG subfamily. Interacts with KefB.

Its subcellular location is the cell inner membrane. The catalysed reaction is a quinone + NADH + H(+) = a quinol + NAD(+). It carries out the reaction a quinone + NADPH + H(+) = a quinol + NADP(+). Regulatory subunit of a potassium efflux system that confers protection against electrophiles. Required for full activity of KefB. This Salmonella enteritidis PT4 (strain P125109) protein is Glutathione-regulated potassium-efflux system ancillary protein KefG.